The following is a 325-amino-acid chain: D site-binding protein (325 aa).

Disordered stretches follow at residues M1–S98, L124–M203, and F230–E256. Gly residues predominate over residues G17–L28. Positions A71–A80 are enriched in low complexity. S86 carries the phosphoserine modification. Over residues R88 to S98 the composition is skewed to low complexity. Residues P129 to G153 show a composition bias toward pro residues. Residues P154 to A171 are compositionally biased toward low complexity. Positions D255 to Y318 constitute a bZIP domain. The tract at residues K257 to K279 is basic motif. A leucine-zipper region spans residues I283–L297.

The protein belongs to the bZIP family. PAR subfamily. In terms of assembly, binds DNA as a homodimer or a heterodimer. Can form a heterodimer with TEF. As to expression, expressed in the suprachiasmatic nuclei (SCN) and in most peripheral tissues, with a strong circadian rhythmicity.

It is found in the nucleus. In terms of biological role, this transcriptional activator recognizes and binds to the sequence 5'-RTTAYGTAAY-3' found in the promoter of genes such as albumin, CYP2A4 and CYP2A5. It is not essential for circadian rhythm generation, but modulates important clock output genes. May be a direct target for regulation by the circadian pacemaker component clock. May affect circadian period and sleep regulation. In Mus musculus (Mouse), this protein is D site-binding protein (Dbp).